We begin with the raw amino-acid sequence, 382 residues long: Ubiquitin-like protease 4 (382 aa).

A disordered region spans residues 46–106 (GTHLDGSIGE…DNDEWTNQKR (61 aa)). Over residues 84–100 (DLVDEDEEEEDEEDNDE) the composition is skewed to acidic residues.

This sequence belongs to the peptidase C48 family. Expressed in hermaphrodite-specific neurons, head muscles, body wall muscles and pharyngeal cells.

It is found in the cytoplasm. Its subcellular location is the cytoskeleton. It localises to the microtubule organizing center. The protein localises to the centrosome. The protein resides in the nucleus. It is found in the mitochondrion matrix. The protein operates within protein modification; protein sumoylation. Its function is as follows. Protease required for deconjugation of smo-1 conjugates from target proteins which is necessary for cell cycle progression. Required for respiration and the maintenance of normal mitochondrial homeostasis. In response to mitochondrial stress, required for the removal of smo-1 conjugates from the transcription factor dve-1, which promotes the translocation of dve-1 from the cytosol to the nucleus to initiate the mitochondrial unfolded protein response. Furthermore, removes the smo-1 conjugates from the transcription factor atfs-1 to promote its stability and activate the mitochondrial unfolded protein response. Also plays a role in promoting mitochondrial unfolded protein response-mediated innate immunity following infection with P.aeruginosa. This chain is Ubiquitin-like protease 4, found in Caenorhabditis elegans.